Here is a 2350-residue protein sequence, read N- to C-terminus: Probable JmjC domain-containing histone demethylation protein 2C (2350 aa).

Disordered regions lie at residues 96-302 and 314-336; these read TRAQ…LQEC and PKDR…NDTH. Positions 98 to 127 are enriched in polar residues; that stretch reads AQANSPRPAMNSQAAVPKQNTHQQQQQRSI. Ser-135 and Ser-138 each carry phosphoserine. A compositionally biased stretch (basic and acidic residues) spans 141–160; that stretch reads DEEKMKEDKYDCVSRGENPK. A compositionally biased stretch (basic residues) spans 161–171; sequence GKNKHVVTKRR. Residues 172–189 are compositionally biased toward basic and acidic residues; sequence KPEEAEKRLSMKRLRTDN. Low complexity predominate over residues 190–200; the sequence is ASDASESSDAE. Phosphoserine is present on residues Ser-191 and Ser-194. A compositionally biased stretch (basic and acidic residues) spans 257–280; the sequence is QEDKNHNEGEKPKSTDSHLQDKMT. Polar residues predominate over residues 281 to 302; it reads LRSSEQATVADHNSNDSVLQEC. Ser-294 and Ser-320 each carry phosphoserine. At Thr-324 the chain carries Phosphothreonine. Phosphoserine is present on residues Ser-420, Ser-436, Ser-457, Ser-458, Ser-460, Ser-471, and Ser-762. 5 disordered regions span residues 426–486, 747–766, 859–883, 1030–1083, and 1422–1508; these read SVTE…NSQA, SSAE…PPLT, RENY…DKDV, RKES…DQSL, and EKVS…VPRS. Low complexity-rich tracts occupy residues 863–874 and 1034–1045; these read SRVVPSSSSPKS and SYSSLSPPTLTP. The span at 1071–1083 shows a compositional bias: polar residues; that stretch reads SQSNFKNSSDQSL. Residues 1454–1463 show a composition bias toward basic residues; sequence KRQPKPTYKK. The segment covering 1464-1480 has biased composition (basic and acidic residues); that stretch reads KQNDLQKRKGEVEEDSK. The C6-type zinc-finger motif lies at 1657-1682; the sequence is CDACEATLFNVHWVCRKCGFVACLDC. Positions 1776-1818 are enriched in polar residues; the sequence is KTSVSLPESQQQNSPQKSQTNGNSSPGSASTDSRLTPPESQSP. A disordered region spans residues 1776 to 1874; that stretch reads KTSVSLPESQ…PASQSNEQGS (99 aa). Phosphoserine is present on Ser-1800. The span at 1826–1849 shows a compositional bias: basic and acidic residues; the sequence is AEQKSREEKQENKEFTLEREIKED. A compositionally biased stretch (polar residues) spans 1855–1874; that stretch reads SDSPNGSTSPPASQSNEQGS. An LXXLL motif motif is present at residues 1876–1880; it reads LRDLL. The tract at residues 1933–1962 is disordered; the sequence is PNKTSKINIKSEPNEEPKESSLPATDESNK. Lys-1942 is covalently cross-linked (Glycyl lysine isopeptide (Lys-Gly) (interchain with G-Cter in SUMO2)). The 225-residue stretch at 2084 to 2308 folds into the JmjC domain; it reads MPTRYEDFLR…QSFHLTQELR (225 aa). Residues His-2146, Glu-2148, and His-2276 each contribute to the Fe cation site.

It belongs to the JHDM2 histone demethylase family. It depends on Fe(2+) as a cofactor.

The protein localises to the nucleus. Its function is as follows. Probable histone demethylase that specifically demethylates 'Lys-9' of histone H3, thereby playing a central role in histone code. Demethylation of Lys residue generates formaldehyde and succinate. May be involved in hormone-dependent transcriptional activation, by participating in recruitment to androgen-receptor target genes. In Mus musculus (Mouse), this protein is Probable JmjC domain-containing histone demethylation protein 2C (Jmjd1c).